The sequence spans 124 residues: Small ribosomal subunit protein uS12 (124 aa).

At D89 the chain carries 3-methylthioaspartic acid.

The protein belongs to the universal ribosomal protein uS12 family. As to quaternary structure, part of the 30S ribosomal subunit. Contacts proteins S8 and S17. May interact with IF1 in the 30S initiation complex.

In terms of biological role, with S4 and S5 plays an important role in translational accuracy. Functionally, interacts with and stabilizes bases of the 16S rRNA that are involved in tRNA selection in the A site and with the mRNA backbone. Located at the interface of the 30S and 50S subunits, it traverses the body of the 30S subunit contacting proteins on the other side and probably holding the rRNA structure together. The combined cluster of proteins S8, S12 and S17 appears to hold together the shoulder and platform of the 30S subunit. This is Small ribosomal subunit protein uS12 from Serratia proteamaculans (strain 568).